The primary structure comprises 992 residues: UPF0182 protein Mb3215c (992 aa).

7 helical membrane passes run 17–39, 59–81, 113–135, 169–191, 212–229, 255–277, and 284–306; these read RILI…LIDA, LATR…FGGL, LVGI…SYWA, LMLS…AHYI, LVSL…AYWL, VLPA…FSAI, and IPAI…WPLI. A disordered region spans residues 906-938; it reads PTEAAVPPSPAANPPPPASGPQPPPVTAAPPVP. The segment covering 912–938 has biased composition (pro residues); that stretch reads PPSPAANPPPPASGPQPPPVTAAPPVP.

This sequence belongs to the UPF0182 family.

The protein localises to the cell membrane. The protein is UPF0182 protein Mb3215c of Mycobacterium bovis (strain ATCC BAA-935 / AF2122/97).